The primary structure comprises 640 residues: Dextranase (640 aa).

Residues 1–32 form the signal peptide; sequence MPGTGLGRLAKRMTAAAAVFFISTSAVLPAQA. Residues 33-49 constitute a propeptide that is removed on maturation; the sequence is ATAPAAAPPGVPAALKA. The segment at 248 to 269 is disordered; it reads EQKERLVPTEESGSIHYPEPGE.

It belongs to the glycosyl hydrolase 49 family.

It localises to the secreted. The enzyme catalyses Endohydrolysis of (1-&gt;6)-alpha-D-glucosidic linkages in dextran.. Its function is as follows. Efficiently decomposes water-insoluble glucan as well as dextran. This is Dextranase from Arthrobacter sp. (strain CB-8).